Here is a 541-residue protein sequence, read N- to C-terminus: Kinesin light chain 1 (541 aa).

A coiled-coil region spans residues 27 to 156; that stretch reads KTKQVIQGLE…HLEFMNQLKK (130 aa). The span at 156–176 shows a compositional bias: basic and acidic residues; the sequence is KYDDDISPSEDKDSDSSKEPL. Residues 156–201 form a disordered region; it reads KYDDDISPSEDKDSDSSKEPLDDLFPNDEDEPGQGIQHSDSSAAAA. Phosphoserine is present on Ser162. 5 TPR repeats span residues 211–244, 253–286, 295–328, 337–370, and 380–413; these read LRTLHNLVIQYASQGRYEVAVPSCKQALEDLEKT, ATMLNILALVYRDQNKYKDAANLLNDALAIREKT, AATLNNLAVLYGKRGKYKEAEPLCKRALEIREKV, AKQLNNLALLCQNQGKYEEVEYYYQRALGIYQTK, and AKTKNNLASCYLKQGKFKQAETLYKEILTRAHEA. Position 448 is a phosphotyrosine (Tyr448). The residue at position 459 (Ser459) is a Phosphoserine. Residues 463 to 496 form a TPR 6 repeat; the sequence is TTTLKNLGALYRRQGKFEAAETLEEAAMRSRKQG. Residues 493-541 are disordered; that stretch reads RKQGLDNVHKQRVAEVLNDPESMEKRRSRESLNMDVVKYESGPDGGEEA. Composition is skewed to basic and acidic residues over residues 495–505 and 514–524; these read QGLDNVHKQRV and SMEKRRSRESL. Ser520 and Ser523 each carry phosphoserine; by AMPK.

The protein belongs to the kinesin light chain family. As to quaternary structure, oligomeric complex composed of two heavy chains and two light chains. Interacts with SPAG9. Interacts with ATCAY; may link mitochondria to KLC1 and regulate mitochondria localization into neuron projections. Interacts (via TPR repeats) with TOR1A; the interaction associates TOR1A with the kinesin oligomeric complex. Interacts with BORCS5. Interacts with MAPK8IP3/JIP3 and NTRK2/TRKB; interaction with NTRK2/TRKB is mediated by MAPK8IP3/JIP3. Interacts with CLSTN1; phosphorylation at Ser-459 inhibits interaction with CLSTN1. Phosphorylation at Ser-459 by ERK inhibits interaction with CLSTN1 and localization to cytoplasmic vesicles.

The protein localises to the cell projection. It localises to the growth cone. The protein resides in the cytoplasmic vesicle. Its subcellular location is the cytoplasm. It is found in the cytoskeleton. Kinesin is a microtubule-associated force-producing protein that may play a role in organelle transport. The light chain may function in coupling of cargo to the heavy chain or in the modulation of its ATPase activity. The protein is Kinesin light chain 1 (Klc1) of Mus musculus (Mouse).